Consider the following 180-residue polypeptide: Hypoxanthine-guanine phosphoribosyltransferase (180 aa).

Diphosphate-binding residues include Lys43 and Gly44. The Mg(2+) site is built by Glu99 and Asp100. Asp103 serves as the catalytic Proton acceptor. GMP is bound by residues Lys131, 152-153, and Asp159; that span reads FV. Arg165 is a diphosphate binding site.

Belongs to the purine/pyrimidine phosphoribosyltransferase family. Mg(2+) is required as a cofactor.

It is found in the cytoplasm. The catalysed reaction is IMP + diphosphate = hypoxanthine + 5-phospho-alpha-D-ribose 1-diphosphate. It carries out the reaction GMP + diphosphate = guanine + 5-phospho-alpha-D-ribose 1-diphosphate. The protein operates within purine metabolism; IMP biosynthesis via salvage pathway; IMP from hypoxanthine: step 1/1. It participates in purine metabolism; GMP biosynthesis via salvage pathway; GMP from guanine: step 1/1. Functionally, purine salvage pathway enzyme that catalyzes the transfer of the ribosyl-5-phosphate group from 5-phospho-alpha-D-ribose 1-diphosphate (PRPP) to the N9 position of the 6-oxopurines hypoxanthine and guanine to form the corresponding ribonucleotides IMP (inosine 5'-monophosphate) and GMP (guanosine 5'-monophosphate), with the release of PPi. This chain is Hypoxanthine-guanine phosphoribosyltransferase (hpt), found in Streptococcus pneumoniae serotype 4 (strain ATCC BAA-334 / TIGR4).